The following is a 146-amino-acid chain: Ribosomal RNA large subunit methyltransferase H (146 aa).

Residues L60, G93, and 112–117 (MGKMTL) each bind S-adenosyl-L-methionine.

Belongs to the RNA methyltransferase RlmH family. In terms of assembly, homodimer.

It is found in the cytoplasm. The catalysed reaction is pseudouridine(1915) in 23S rRNA + S-adenosyl-L-methionine = N(3)-methylpseudouridine(1915) in 23S rRNA + S-adenosyl-L-homocysteine + H(+). In terms of biological role, specifically methylates the pseudouridine at position 1915 (m3Psi1915) in 23S rRNA. The chain is Ribosomal RNA large subunit methyltransferase H from Koribacter versatilis (strain Ellin345).